The following is a 419-amino-acid chain: GTPase Obg (419 aa).

Residues 1-156 (MFIDKVNTYL…AEVNLELRLI (156 aa)) enclose the Obg domain. The OBG-type G domain maps to 157 to 325 (ADVGLLGLPN…LLKEMLRMLE (169 aa)). GTP is bound by residues 163–170 (GLPNAGKS), 188–192 (FTTLA), 209–212 (DIPG), 279–282 (NKID), and 306–308 (SAA). Mg(2+) is bound by residues S170 and T190. One can recognise an OCT domain in the interval 342–419 (KKYIYEPEFK…IGDFEFTFEK (78 aa)).

Belongs to the TRAFAC class OBG-HflX-like GTPase superfamily. OBG GTPase family. Monomer. It depends on Mg(2+) as a cofactor.

It is found in the cytoplasm. In terms of biological role, an essential GTPase which binds GTP, GDP and possibly (p)ppGpp with moderate affinity, with high nucleotide exchange rates and a fairly low GTP hydrolysis rate. Plays a role in control of the cell cycle, stress response, ribosome biogenesis and in those bacteria that undergo differentiation, in morphogenesis control. The protein is GTPase Obg of Endomicrobium trichonymphae.